Consider the following 737-residue polypeptide: Polyribonucleotide nucleotidyltransferase (737 aa).

Mg(2+) contacts are provided by Asp-489 and Asp-495. The KH domain maps to 556-615 (PKIDTIKIDVDKIKIVIGKGGETIDKIIAETGVKIDIDEEGNVSIYSSDQDAINRAKEII). Residues 625–693 (DEVYRAKVVR…EKGRIDASMK (69 aa)) enclose the S1 motif domain. Residues 691–737 (SMKALLPRPPKPEHDEKGEKSERPHRPRHQKDYKPKKEFTETPKDSE) are disordered. Residues 700-737 (PKPEHDEKGEKSERPHRPRHQKDYKPKKEFTETPKDSE) are compositionally biased toward basic and acidic residues.

Belongs to the polyribonucleotide nucleotidyltransferase family. The cofactor is Mg(2+).

It is found in the cytoplasm. It carries out the reaction RNA(n+1) + phosphate = RNA(n) + a ribonucleoside 5'-diphosphate. Involved in mRNA degradation. Catalyzes the phosphorolysis of single-stranded polyribonucleotides processively in the 3'- to 5'-direction. The chain is Polyribonucleotide nucleotidyltransferase from Streptococcus pneumoniae serotype 2 (strain D39 / NCTC 7466).